Reading from the N-terminus, the 318-residue chain is Type II restriction enzyme HaeIII (318 aa).

It carries out the reaction Endonucleolytic cleavage of DNA to give specific double-stranded fragments with terminal 5'-phosphates.. A P subtype restriction enzyme that recognizes the double-stranded sequence 5'-GGCC-3' and cleaves after G-2. The sequence is that of Type II restriction enzyme HaeIII (haeIIIR) from Haemophilus aegyptius.